Consider the following 377-residue polypeptide: Mechanosensory abnormality protein 6 (377 aa).

At Met1–Arg13 the chain is on the cytoplasmic side. A helical membrane pass occupies residues Phe14–Leu34. The Extracellular segment spans residues Asp35–Thr377. Residues Cys48 and Cys369 are joined by a disulfide bond. Residue Asn94 is glycosylated (N-linked (GlcNAc...) asparagine).

Belongs to the paraoxonase family. Component of a non-voltage-gated amiloride-sensitive cation channel complex (also called the degenerin channel complex) composed of at least the mec-2, mec-4, mec-6 and mec-10 subunits; the complex mediates mechanotransduction in touch cells. Interacts with mec-2, mec-4 and mec-10. In terms of processing, glycosylated. As to expression, expressed in neurons including the six touch receptors, ventral cord motor neurons, HSN, PVD, PVC, IL1, and several neurons near the nerve ring, in the anal ganglion and in the male tail sensory rays, in muscles including the body wall, vulval, intestinal, anal depressor and sphincter muscles, and in the excretory canal.

It is found in the cell membrane. The protein resides in the cell projection. It localises to the axon. In terms of biological role, subunit of an amiloride-sensitive cation channel (degenerin channel complex) permeable for sodium, potassium, lithium and N-methylglucamine, and required for mechanosensory transduction (touch sensitivity). Interacts with degenerin channel proteins and stabilizes the channel. Plays a role in mechanosensory transduction (touch sensitivity). This is Mechanosensory abnormality protein 6 from Caenorhabditis elegans.